The primary structure comprises 415 residues: Imidazolonepropionase (415 aa).

2 residues coordinate Fe(3+): H83 and H85. H83 and H85 together coordinate Zn(2+). The 4-imidazolone-5-propanoate site is built by R92, Y155, and H188. Y155 provides a ligand contact to N-formimidoyl-L-glutamate. Position 250 (H250) interacts with Fe(3+). Residue H250 participates in Zn(2+) binding. Q253 lines the 4-imidazolone-5-propanoate pocket. D324 serves as a coordination point for Fe(3+). Position 324 (D324) interacts with Zn(2+). The N-formimidoyl-L-glutamate site is built by N326 and G328. S329 contacts 4-imidazolone-5-propanoate.

This sequence belongs to the metallo-dependent hydrolases superfamily. HutI family. It depends on Zn(2+) as a cofactor. The cofactor is Fe(3+).

Its subcellular location is the cytoplasm. The catalysed reaction is 4-imidazolone-5-propanoate + H2O = N-formimidoyl-L-glutamate. It functions in the pathway amino-acid degradation; L-histidine degradation into L-glutamate; N-formimidoyl-L-glutamate from L-histidine: step 3/3. In terms of biological role, catalyzes the hydrolytic cleavage of the carbon-nitrogen bond in imidazolone-5-propanoate to yield N-formimidoyl-L-glutamate. It is the third step in the universal histidine degradation pathway. The protein is Imidazolonepropionase of Rubrobacter xylanophilus (strain DSM 9941 / JCM 11954 / NBRC 16129 / PRD-1).